A 318-amino-acid chain; its full sequence is 4-hydroxy-3-methylbut-2-enyl diphosphate reductase (318 aa).

Cysteine 12 provides a ligand contact to [4Fe-4S] cluster. 2 residues coordinate (2E)-4-hydroxy-3-methylbut-2-enyl diphosphate: histidine 41 and histidine 74. Histidine 41 and histidine 74 together coordinate dimethylallyl diphosphate. Residues histidine 41 and histidine 74 each contribute to the isopentenyl diphosphate site. Cysteine 96 is a [4Fe-4S] cluster binding site. Residue histidine 124 coordinates (2E)-4-hydroxy-3-methylbut-2-enyl diphosphate. Residue histidine 124 coordinates dimethylallyl diphosphate. Histidine 124 contacts isopentenyl diphosphate. The Proton donor role is filled by glutamate 126. Threonine 168 contacts (2E)-4-hydroxy-3-methylbut-2-enyl diphosphate. Position 198 (cysteine 198) interacts with [4Fe-4S] cluster. (2E)-4-hydroxy-3-methylbut-2-enyl diphosphate is bound by residues serine 226, serine 227, asparagine 228, and serine 270. The dimethylallyl diphosphate site is built by serine 226, serine 227, asparagine 228, and serine 270. Serine 226, serine 227, asparagine 228, and serine 270 together coordinate isopentenyl diphosphate.

It belongs to the IspH family. [4Fe-4S] cluster serves as cofactor.

The enzyme catalyses isopentenyl diphosphate + 2 oxidized [2Fe-2S]-[ferredoxin] + H2O = (2E)-4-hydroxy-3-methylbut-2-enyl diphosphate + 2 reduced [2Fe-2S]-[ferredoxin] + 2 H(+). The catalysed reaction is dimethylallyl diphosphate + 2 oxidized [2Fe-2S]-[ferredoxin] + H2O = (2E)-4-hydroxy-3-methylbut-2-enyl diphosphate + 2 reduced [2Fe-2S]-[ferredoxin] + 2 H(+). Its pathway is isoprenoid biosynthesis; dimethylallyl diphosphate biosynthesis; dimethylallyl diphosphate from (2E)-4-hydroxy-3-methylbutenyl diphosphate: step 1/1. It functions in the pathway isoprenoid biosynthesis; isopentenyl diphosphate biosynthesis via DXP pathway; isopentenyl diphosphate from 1-deoxy-D-xylulose 5-phosphate: step 6/6. Functionally, catalyzes the conversion of 1-hydroxy-2-methyl-2-(E)-butenyl 4-diphosphate (HMBPP) into a mixture of isopentenyl diphosphate (IPP) and dimethylallyl diphosphate (DMAPP). Acts in the terminal step of the DOXP/MEP pathway for isoprenoid precursor biosynthesis. The sequence is that of 4-hydroxy-3-methylbut-2-enyl diphosphate reductase from Psychrobacter sp. (strain PRwf-1).